The sequence spans 326 residues: ATPase GET3 (326 aa).

32-39 contacts ATP; that stretch reads KGGVGKTT. D61 is an active-site residue. The ATP site is built by E244 and N271. Residues C282 and C285 each contribute to the Zn(2+) site.

The protein belongs to the arsA ATPase family. As to quaternary structure, homodimer.

It localises to the cytoplasm. Its subcellular location is the endoplasmic reticulum. Functionally, ATPase required for the post-translational delivery of tail-anchored (TA) proteins to the endoplasmic reticulum. Recognizes and selectively binds the transmembrane domain of TA proteins in the cytosol. This complex then targets to the endoplasmic reticulum by membrane-bound receptors, where the tail-anchored protein is released for insertion. This process is regulated by ATP binding and hydrolysis. ATP binding drives the homodimer towards the closed dimer state, facilitating recognition of newly synthesized TA membrane proteins. ATP hydrolysis is required for insertion. Subsequently, the homodimer reverts towards the open dimer state, lowering its affinity for the membrane-bound receptor, and returning it to the cytosol to initiate a new round of targeting. This is ATPase GET3 from Phaeosphaeria nodorum (strain SN15 / ATCC MYA-4574 / FGSC 10173) (Glume blotch fungus).